An 836-amino-acid polypeptide reads, in one-letter code: Transcription factor vrtR2 (836 aa).

Polar residues predominate over residues 1–26 (MPSLSSKTSTMQRSCRPQMSACPNQQ). The interval 1–29 (MPSLSSKTSTMQRSCRPQMSACPNQQQKD) is disordered. A DNA-binding region (zn(2)-C6 fungal-type) is located at residues 37-63 (CVLCRDRKLKCDKLDPCSNCTSSGVAC). Residues 72-114 (PRGRHARTVQTKASTPPDTRRRGSSNESTTAPAPDDGGLGTHI) form a disordered region. Over residues 79-88 (TVQTKASTPP) the composition is skewed to polar residues.

It is found in the nucleus. Probable transcription factor that regulates expression of the gene cluster that mediates the biosynthesis of viridicatumtoxin, a tetracycline-like fungal meroterpenoid with a unique, fused spirobicyclic ring system. In Penicillium aethiopicum, this protein is Transcription factor vrtR2.